The primary structure comprises 79 residues: Small ribosomal subunit protein bS18 (79 aa).

This sequence belongs to the bacterial ribosomal protein bS18 family. In terms of assembly, part of the 30S ribosomal subunit. Forms a tight heterodimer with protein bS6.

Its function is as follows. Binds as a heterodimer with protein bS6 to the central domain of the 16S rRNA, where it helps stabilize the platform of the 30S subunit. The polypeptide is Small ribosomal subunit protein bS18 (Streptococcus pneumoniae serotype 19F (strain G54)).